A 118-amino-acid polypeptide reads, in one-letter code: Large ribosomal subunit protein uL22c (118 aa).

The protein belongs to the universal ribosomal protein uL22 family. Part of the 50S ribosomal subunit.

It is found in the plastid. The protein resides in the chloroplast. In terms of biological role, this protein binds specifically to 23S rRNA. Its function is as follows. The globular domain of the protein is located near the polypeptide exit tunnel on the outside of the subunit, while an extended beta-hairpin is found that lines the wall of the exit tunnel in the center of the 70S ribosome. In Rhodomonas salina (Cryptomonas salina), this protein is Large ribosomal subunit protein uL22c (rpl22).